The sequence spans 239 residues: Sugar fermentation stimulation protein homolog (239 aa).

This sequence belongs to the SfsA family.

The protein is Sugar fermentation stimulation protein homolog of Synechococcus sp. (strain JA-2-3B'a(2-13)) (Cyanobacteria bacterium Yellowstone B-Prime).